The primary structure comprises 346 residues: GTPase Obg (346 aa).

In terms of domain architecture, Obg spans 1–158 (MKFLDQVKIY…RAIWLRLKLI (158 aa)). Residues 159–327 (ADVGLVGLPN…LLREAFALVR (169 aa)) enclose the OBG-type G domain. Residues 165–172 (GLPNAGKS), 190–194 (FTTLA), 212–215 (DIPG), 279–282 (NKID), and 308–310 (SGF) each bind GTP. Mg(2+)-binding residues include Ser172 and Thr192.

Belongs to the TRAFAC class OBG-HflX-like GTPase superfamily. OBG GTPase family. In terms of assembly, monomer. Mg(2+) is required as a cofactor.

Its subcellular location is the cytoplasm. Its function is as follows. An essential GTPase which binds GTP, GDP and possibly (p)ppGpp with moderate affinity, with high nucleotide exchange rates and a fairly low GTP hydrolysis rate. Plays a role in control of the cell cycle, stress response, ribosome biogenesis and in those bacteria that undergo differentiation, in morphogenesis control. This chain is GTPase Obg, found in Phenylobacterium zucineum (strain HLK1).